The primary structure comprises 590 residues: Regulatory solute carrier protein family 1 member 1 (590 aa).

Disordered regions lie at residues 1-116, 144-234, 277-331, and 359-466; these read MSSS…TQGL, EEGW…PDSE, SPSS…AEES, and EEVT…SHRT. A compositionally biased stretch (polar residues) spans 16 to 35; it reads SSGQSPEAGNPTSLARSVSA. The span at 78–91 shows a compositional bias: low complexity; that stretch reads SPCAAAAAPSSAMP. The span at 150 to 161 shows a compositional bias: polar residues; sequence ENQNPSQVNDLQ. Basic and acidic residues-rich tracts occupy residues 162–179 and 188–203; these read QHQEPENARHEAGPRDAP and PGERQQKHEVADREAT. Positions 313-331 are enriched in low complexity; it reads SSSSVCGSSQPPAESAEES. The segment covering 362–376 has biased composition (polar residues); it reads TCQSEGTAWGQTRVN. Composition is skewed to basic and acidic residues over residues 380–395 and 404–420; these read RWTESERRTQDEDRPQ and VKTEKLTDASPDTRIED. Residues 451 to 465 are compositionally biased toward polar residues; the sequence is SVTVTSAETSNQSHR. One can recognise a UBA domain in the interval 544-584; sequence GFPAADIDRILRAGFTLQEALGALHRVGGNADLALLVLLAK.

As to quaternary structure, interacts with YRDC. As to expression, highly expressed in renal outer medulla, renal inner medulla, duodenum, ileum and jejunum. Moderately expressed in renal outer cortex, renal papilla, brain and liver.

It localises to the cell membrane. The protein localises to the nucleus. It is found in the golgi apparatus. Its subcellular location is the trans-Golgi network. Its function is as follows. Mediates transcriptional and post-transcriptional regulation of SLC5A1. Inhibits a dynamin and PKC-dependent exocytotic pathway of SLC5A1. Also involved in transcriptional regulation of SLC22A2. Exhibits glucose-dependent, short-term inhibition of SLC5A1 and SLC22A2 by inhibiting the release of vesicles from the trans-Golgi network. This Oryctolagus cuniculus (Rabbit) protein is Regulatory solute carrier protein family 1 member 1 (RSC1A1).